A 247-amino-acid polypeptide reads, in one-letter code: Carboxy-S-adenosyl-L-methionine synthase (247 aa).

S-adenosyl-L-methionine contacts are provided by residues Tyr-40, 65–67, 90–91, 122–123, Asn-137, and Arg-204; these read GCS, DN, and DI.

Belongs to the class I-like SAM-binding methyltransferase superfamily. Cx-SAM synthase family. As to quaternary structure, homodimer.

The catalysed reaction is prephenate + S-adenosyl-L-methionine = carboxy-S-adenosyl-L-methionine + 3-phenylpyruvate + H2O. In terms of biological role, catalyzes the conversion of S-adenosyl-L-methionine (SAM) to carboxy-S-adenosyl-L-methionine (Cx-SAM). The protein is Carboxy-S-adenosyl-L-methionine synthase of Stutzerimonas stutzeri (strain A1501) (Pseudomonas stutzeri).